Reading from the N-terminus, the 161-residue chain is Large ribosomal subunit protein uL30m (161 aa).

The transit peptide at methionine 1–histidine 34 directs the protein to the mitochondrion.

This sequence belongs to the universal ribosomal protein uL30 family. Component of the mitochondrial ribosome large subunit (39S) which comprises a 16S rRNA and about 50 distinct proteins.

The protein resides in the mitochondrion. The sequence is that of Large ribosomal subunit protein uL30m (MRPL30) from Macaca fascicularis (Crab-eating macaque).